The chain runs to 154 residues: Ribosomal RNA large subunit methyltransferase H (154 aa).

Residues Leu-70, Gly-102, and 121–126 (LSRLTF) contribute to the S-adenosyl-L-methionine site.

The protein belongs to the RNA methyltransferase RlmH family. In terms of assembly, homodimer.

Its subcellular location is the cytoplasm. It carries out the reaction pseudouridine(1915) in 23S rRNA + S-adenosyl-L-methionine = N(3)-methylpseudouridine(1915) in 23S rRNA + S-adenosyl-L-homocysteine + H(+). Its function is as follows. Specifically methylates the pseudouridine at position 1915 (m3Psi1915) in 23S rRNA. The polypeptide is Ribosomal RNA large subunit methyltransferase H (Geobacter metallireducens (strain ATCC 53774 / DSM 7210 / GS-15)).